Here is a 266-residue protein sequence, read N- to C-terminus: Hemin import ATP-binding protein HmuV (266 aa).

The ABC transporter domain maps to 12–248; it reads LEASHLHYHV…ETLTQWYQAD (237 aa). Residue 44–51 coordinates ATP; sequence GPNGAGKS.

The protein belongs to the ABC transporter superfamily. Heme (hemin) importer (TC 3.A.1.14.5) family. In terms of assembly, the complex is composed of two ATP-binding proteins (HmuV), two transmembrane proteins (HmuU) and a solute-binding protein (HmuT).

It is found in the cell inner membrane. Its function is as follows. Part of the ABC transporter complex HmuTUV involved in hemin import. Responsible for energy coupling to the transport system. The polypeptide is Hemin import ATP-binding protein HmuV (Yersinia pestis bv. Antiqua (strain Antiqua)).